Reading from the N-terminus, the 707-residue chain is Trans-feruloyl-CoA synthase FCS1 (707 aa).

Residues His267 and 524 to 535 contribute to the ATP site; that span reads ARAIGYPVVMKA. In terms of domain architecture, ATP-grasp spans 498 to 549; sequence KELLRPLGIAFPPSQFAANAEAAAAAARAIGYPVVMKAQAAALGHKSDAGGV.

This sequence in the N-terminal section; belongs to the acetate CoA ligase alpha subunit family. In the C-terminal section; belongs to the acetate CoA ligase beta subunit family. Homodimer.

It catalyses the reaction (E)-ferulate + ATP + CoA = (E)-feruloyl-CoA + ADP + phosphate. In terms of biological role, catalyzes the formation of feruloyl-CoA, ADP and phosphate from ferulate, CoA and ATP. In Unknown prokaryotic organism, this protein is Trans-feruloyl-CoA synthase FCS1.